The chain runs to 88 residues: Large ribosomal subunit protein eL20 (88 aa).

This sequence belongs to the eukaryotic ribosomal protein eL20 family. Part of the 50S ribosomal subunit. Binds 23S rRNA.

This Aeropyrum pernix (strain ATCC 700893 / DSM 11879 / JCM 9820 / NBRC 100138 / K1) protein is Large ribosomal subunit protein eL20.